Consider the following 671-residue polypeptide: NADH-quinone oxidoreductase subunit G (671 aa).

Residues 1 to 78 (MIKLNVDGSE…GMVIHTDTPM (78 aa)) form the 2Fe-2S ferredoxin-type domain. Cysteine 34, cysteine 45, cysteine 48, and cysteine 62 together coordinate [2Fe-2S] cluster. Residues 78 to 117 (MVKKAREGVMEFLLINHPLDCPICDQGGECNLQDQAFRYG) form the 4Fe-4S His(Cys)3-ligated-type domain. [4Fe-4S] cluster contacts are provided by histidine 94, cysteine 98, cysteine 101, cysteine 107, cysteine 146, cysteine 149, cysteine 152, and cysteine 196. Residues 215-271 (LKHTASIGVHDAEGSNIRIDSRGDEVMRILPRVNEEINEEWLSDKNRFSYDGLKYQR) form the 4Fe-4S Mo/W bis-MGD-type domain.

It belongs to the complex I 75 kDa subunit family. [2Fe-2S] cluster is required as a cofactor. The cofactor is [4Fe-4S] cluster.

It catalyses the reaction a quinone + NADH + 5 H(+)(in) = a quinol + NAD(+) + 4 H(+)(out). Its function is as follows. NDH-1 shuttles electrons from NADH, via FMN and iron-sulfur (Fe-S) centers, to quinones in the respiratory chain. Couples the redox reaction to proton translocation (for every two electrons transferred, four hydrogen ions are translocated across the cytoplasmic membrane), and thus conserves the redox energy in a proton gradient. The sequence is that of NADH-quinone oxidoreductase subunit G (nuoG) from Rickettsia conorii (strain ATCC VR-613 / Malish 7).